The primary structure comprises 261 residues: Thiazole synthase (261 aa).

The active-site Schiff-base intermediate with DXP is Lys-102. 1-deoxy-D-xylulose 5-phosphate-binding positions include Gly-163, 189-190, and 211-212; these read AG and NT.

This sequence belongs to the ThiG family. In terms of assembly, homotetramer. Forms heterodimers with either ThiH or ThiS.

Its subcellular location is the cytoplasm. It carries out the reaction [ThiS sulfur-carrier protein]-C-terminal-Gly-aminoethanethioate + 2-iminoacetate + 1-deoxy-D-xylulose 5-phosphate = [ThiS sulfur-carrier protein]-C-terminal Gly-Gly + 2-[(2R,5Z)-2-carboxy-4-methylthiazol-5(2H)-ylidene]ethyl phosphate + 2 H2O + H(+). The protein operates within cofactor biosynthesis; thiamine diphosphate biosynthesis. Its function is as follows. Catalyzes the rearrangement of 1-deoxy-D-xylulose 5-phosphate (DXP) to produce the thiazole phosphate moiety of thiamine. Sulfur is provided by the thiocarboxylate moiety of the carrier protein ThiS. In vitro, sulfur can be provided by H(2)S. In Myxococcus xanthus (strain DK1622), this protein is Thiazole synthase.